The sequence spans 109 residues: Iron-sulfur assembly protein IscA-like 3, mitochondrial (109 aa).

The transit peptide at 1 to 18 directs the protein to the mitochondrion; it reads MRKQVLALSDTAAARIRQ. Cys-37, Cys-100, and Cys-102 together coordinate Fe cation.

Belongs to the HesB/IscA family. As to quaternary structure, homodimer; may form tetramers and higher multimers. Fe cation serves as cofactor.

It localises to the mitochondrion. Its function is as follows. Involved in the assembly of mitochondrial iron-sulfur proteins. Probably involved in the binding of an intermediate of Fe/S cluster assembly. The sequence is that of Iron-sulfur assembly protein IscA-like 3, mitochondrial from Arabidopsis thaliana (Mouse-ear cress).